The sequence spans 430 residues: Adenylosuccinate synthetase (430 aa).

GTP-binding positions include 12 to 18 (GDEGKGK) and 40 to 42 (GHT). The Proton acceptor role is filled by aspartate 13. Mg(2+)-binding residues include aspartate 13 and glycine 40. Residues 13 to 16 (DEGK), 38 to 41 (NAGH), threonine 130, arginine 144, glutamine 224, and threonine 239 contribute to the IMP site. Histidine 41 functions as the Proton donor in the catalytic mechanism. The disordered stretch occupies residues 277 to 297 (PFPTEQDNETGRKIGERGREF). Positions 285–296 (ETGRKIGERGRE) are enriched in basic and acidic residues. 299-305 (TNTGRPR) lines the substrate pocket. An IMP-binding site is contributed by arginine 303. Residues arginine 305, 331-333 (KLD), and 413-415 (STS) contribute to the GTP site.

Belongs to the adenylosuccinate synthetase family. As to quaternary structure, homodimer. It depends on Mg(2+) as a cofactor.

The protein localises to the cytoplasm. It catalyses the reaction IMP + L-aspartate + GTP = N(6)-(1,2-dicarboxyethyl)-AMP + GDP + phosphate + 2 H(+). It participates in purine metabolism; AMP biosynthesis via de novo pathway; AMP from IMP: step 1/2. Plays an important role in the de novo pathway of purine nucleotide biosynthesis. Catalyzes the first committed step in the biosynthesis of AMP from IMP. In Bradyrhizobium sp. (strain ORS 278), this protein is Adenylosuccinate synthetase.